We begin with the raw amino-acid sequence, 345 residues long: S-adenosylmethionine:tRNA ribosyltransferase-isomerase (345 aa).

Belongs to the QueA family. As to quaternary structure, monomer.

The protein localises to the cytoplasm. The catalysed reaction is 7-aminomethyl-7-carbaguanosine(34) in tRNA + S-adenosyl-L-methionine = epoxyqueuosine(34) in tRNA + adenine + L-methionine + 2 H(+). The protein operates within tRNA modification; tRNA-queuosine biosynthesis. Its function is as follows. Transfers and isomerizes the ribose moiety from AdoMet to the 7-aminomethyl group of 7-deazaguanine (preQ1-tRNA) to give epoxyqueuosine (oQ-tRNA). This chain is S-adenosylmethionine:tRNA ribosyltransferase-isomerase, found in Helicobacter acinonychis (strain Sheeba).